The primary structure comprises 383 residues: Succinyl-diaminopimelate desuccinylase (383 aa).

His74 serves as a coordination point for Zn(2+). Asp76 is an active-site residue. A Zn(2+)-binding site is contributed by Asp107. The Proton acceptor role is filled by Glu141. Zn(2+) contacts are provided by Glu142, Glu170, and His356.

Belongs to the peptidase M20A family. DapE subfamily. Homodimer. The cofactor is Zn(2+). It depends on Co(2+) as a cofactor.

The enzyme catalyses N-succinyl-(2S,6S)-2,6-diaminopimelate + H2O = (2S,6S)-2,6-diaminopimelate + succinate. It functions in the pathway amino-acid biosynthesis; L-lysine biosynthesis via DAP pathway; LL-2,6-diaminopimelate from (S)-tetrahydrodipicolinate (succinylase route): step 3/3. Its function is as follows. Catalyzes the hydrolysis of N-succinyl-L,L-diaminopimelic acid (SDAP), forming succinate and LL-2,6-diaminopimelate (DAP), an intermediate involved in the bacterial biosynthesis of lysine and meso-diaminopimelic acid, an essential component of bacterial cell walls. This is Succinyl-diaminopimelate desuccinylase from Cupriavidus taiwanensis (strain DSM 17343 / BCRC 17206 / CCUG 44338 / CIP 107171 / LMG 19424 / R1) (Ralstonia taiwanensis (strain LMG 19424)).